A 236-amino-acid polypeptide reads, in one-letter code: 5'-methylthioadenosine/S-adenosylhomocysteine nucleosidase (236 aa).

Glu-12 functions as the Proton acceptor in the catalytic mechanism. Substrate is bound by residues Gly-78, Ile-153, and 174–175 (ME). Asp-198 (proton donor) is an active-site residue.

It belongs to the PNP/UDP phosphorylase family. MtnN subfamily.

The catalysed reaction is S-adenosyl-L-homocysteine + H2O = S-(5-deoxy-D-ribos-5-yl)-L-homocysteine + adenine. It carries out the reaction S-methyl-5'-thioadenosine + H2O = 5-(methylsulfanyl)-D-ribose + adenine. The enzyme catalyses 5'-deoxyadenosine + H2O = 5-deoxy-D-ribose + adenine. It functions in the pathway amino-acid biosynthesis; L-methionine biosynthesis via salvage pathway; S-methyl-5-thio-alpha-D-ribose 1-phosphate from S-methyl-5'-thioadenosine (hydrolase route): step 1/2. In terms of biological role, catalyzes the irreversible cleavage of the glycosidic bond in both 5'-methylthioadenosine (MTA) and S-adenosylhomocysteine (SAH/AdoHcy) to adenine and the corresponding thioribose, 5'-methylthioribose and S-ribosylhomocysteine, respectively. Also cleaves 5'-deoxyadenosine, a toxic by-product of radical S-adenosylmethionine (SAM) enzymes, into 5-deoxyribose and adenine. This is 5'-methylthioadenosine/S-adenosylhomocysteine nucleosidase from Shewanella oneidensis (strain ATCC 700550 / JCM 31522 / CIP 106686 / LMG 19005 / NCIMB 14063 / MR-1).